The chain runs to 333 residues: NADH-quinone oxidoreductase subunit H (333 aa).

The next 8 membrane-spanning stretches (helical) occupy residues 15-35 (FFIF…FVTY), 88-108 (FILA…VIPF), 117-137 (IGVG…GVVT), 159-179 (ISYE…AGSL), 191-211 (VWYI…AVAE), 239-259 (WAFF…LITV), 272-294 (GFIP…LIWF), and 313-333 (ILLP…ELFF).

Belongs to the complex I subunit 1 family. NDH-1 is composed of 14 different subunits. Subunits NuoA, H, J, K, L, M, N constitute the membrane sector of the complex.

The protein resides in the cell membrane. It catalyses the reaction a quinone + NADH + 5 H(+)(in) = a quinol + NAD(+) + 4 H(+)(out). NDH-1 shuttles electrons from NADH, via FMN and iron-sulfur (Fe-S) centers, to quinones in the respiratory chain. The immediate electron acceptor for the enzyme in this species is believed to be ubiquinone. Couples the redox reaction to proton translocation (for every two electrons transferred, four hydrogen ions are translocated across the cytoplasmic membrane), and thus conserves the redox energy in a proton gradient. This subunit may bind ubiquinone. The chain is NADH-quinone oxidoreductase subunit H from Bacillus mycoides (strain KBAB4) (Bacillus weihenstephanensis).